The sequence spans 489 residues: Alpha-amylase (489 aa).

The signal sequence occupies residues 1–16; sequence HFKPILVLCLATLALG. Cys-44 and Cys-102 are oxidised to a cystine. The Ca(2+) site is built by Asn-116, Arg-164, and Asp-173. The cysteines at positions 152 and 166 are disulfide-linked. Arg-201 contacts chloride. Catalysis depends on Asp-203, which acts as the Nucleophile. Ca(2+) is bound at residue His-207. Glu-240 acts as the Proton donor in catalysis. The chloride site is built by Asn-303 and Arg-339. 2 disulfides stabilise this stretch: Cys-372–Cys-378 and Cys-443–Cys-455.

It belongs to the glycosyl hydrolase 13 family. As to quaternary structure, monomer. The cofactor is Ca(2+). Chloride serves as cofactor.

It catalyses the reaction Endohydrolysis of (1-&gt;4)-alpha-D-glucosidic linkages in polysaccharides containing three or more (1-&gt;4)-alpha-linked D-glucose units.. The polypeptide is Alpha-amylase (Tribolium castaneum (Red flour beetle)).